Consider the following 219-residue polypeptide: MNILLVEDDLQLGKALCRALELAGFNLCWVRLIADAENKLSSGGFDLMLLDLTLPDGDGLQKLIAWRAAGQNIPIIILTARDRIESLVNSLDSGANDFLAKPFALPELISRVKAVNRRMAGFASQTWSLGALYLDPVNHQVMLDNELLMLSKKEYHLLHELMRCAGTVVRKAVLEQRLFGHGDSVESNSLEVHMHNLRRKIGKDRVITVRGIGYLLKKE.

One can recognise a Response regulatory domain in the interval Asn2 to Asn116. Position 51 is a 4-aspartylphosphate (Asp51). Residues Ser124 to Lys218 constitute a DNA-binding region (ompR/PhoB-type).

The protein resides in the cytoplasm. Functionally, member of the two-component regulatory system RssA/RssB involved in regulation of swarming motility which has been shown to be inhibited by saturated fatty acids. RssA/RssB regulates cellular fatty acid composition, hemolysin production and cell surface topography. RssA/RssB negatively regulates the activity of SlhBA. It can also act as a negative regulator for the control of the swarming initiation. RssB binds its own promoter. This chain is Swarming motility regulation protein RssB (rssB), found in Serratia marcescens.